The chain runs to 270 residues: F-actin-capping protein subunit beta (270 aa).

A compositionally biased stretch (polar residues) spans 245 to 258; sequence QTRSQKSTTDSQEQ. A disordered region spans residues 245–270; that stretch reads QTRSQKSTTDSQEQQQKEVIKGLQNL.

Belongs to the F-actin-capping protein beta subunit family. As to quaternary structure, component of the F-actin capping complex, composed of a heterodimer of an alpha and a beta subunit.

The protein localises to the cytoplasm. It localises to the cytoskeleton. The protein resides in the actin patch. Functionally, F-actin-capping proteins bind in a Ca(2+)-independent manner to the fast growing ends of actin filaments (barbed end) thereby blocking the exchange of subunits at these ends. Unlike other capping proteins (such as gelsolin and severin), these proteins do not sever actin filaments. The protein is F-actin-capping protein subunit beta (CAP2) of Candida glabrata (strain ATCC 2001 / BCRC 20586 / JCM 3761 / NBRC 0622 / NRRL Y-65 / CBS 138) (Yeast).